Consider the following 1136-residue polypeptide: Probable phospholipid-transporting ATPase IIB (1136 aa).

Residues 1–145 (MADQIPLYPV…IKNQKYNIFT (145 aa)) lie on the Cytoplasmic side of the membrane. The helical transmembrane segment at 146–166 (FIPGVLYEQFKFFLNLYFLIV) threads the bilayer. The Extracellular segment spans residues 167-174 (SCSQFVPA). The helical transmembrane segment at 175 to 195 (LKIGYLYTYWAPLGFVLAVTI) threads the bilayer. Over 196 to 383 (MREAVDEFRR…LDLELNQLTK (188 aa)) the chain is Cytoplasmic. The helical transmembrane segment at 384-404 (ALFLALVALSVVMVTLQGFAG) threads the bilayer. The Extracellular segment spans residues 405 to 408 (PWYR). A helical transmembrane segment spans residues 409–429 (SLFRFLLLFSYIIPISLRVNL). Over 430–939 (DMGKAAYGWM…ALGQFVMHRG (510 aa)) the chain is Cytoplasmic. The active-site 4-aspartylphosphate intermediate is D469. ATP contacts are provided by D469, K470, and T471. D469 contributes to the Mg(2+) binding site. T471 provides a ligand contact to Mg(2+). The tract at residues 514-538 (AGGSSAASTPPRKAPSSAPKVRRSV) is disordered. E591, F633, K638, K657, R686, T687, T766, G767, D768, R848, and K854 together coordinate ATP. D874 provides a ligand contact to Mg(2+). Residues N877 and D878 each contribute to the ATP site. D878 contacts Mg(2+). The chain crosses the membrane as a helical span at residues 940-960 (LIISTMQAVFSSVFYFASVPL). The Extracellular portion of the chain corresponds to 961–962 (YQ). The helical transmembrane segment at 963–983 (GFLMVGYATVYTMFPVFSLVL) threads the bilayer. At 984–1012 (DQDVKPEMAMLYPELYKDLTKGRSLSFKT) the chain is on the cytoplasmic side. Residues 1013-1033 (FLVWVLISIYQGGILMFGALV) form a helical membrane-spanning segment. The Extracellular portion of the chain corresponds to 1034–1041 (LFESEFVH). The chain crosses the membrane as a helical span at residues 1042 to 1062 (VVAISFTALVLTELLMVALTV). The Cytoplasmic segment spans residues 1063 to 1066 (RTWH). A helical membrane pass occupies residues 1067-1087 (WLMVVAQLLSLGCYVASLAFL). Over 1088–1098 (NEYFDVAFITT) the chain is Extracellular. The helical transmembrane segment at 1099–1119 (VTFVWKVSAITVVSCLPLYVL) threads the bilayer. Residues 1120-1136 (KYLKRKLSPPSYSKLSS) are Cytoplasmic-facing.

It belongs to the cation transport ATPase (P-type) (TC 3.A.3) family. Type IV subfamily. Mg(2+) is required as a cofactor.

Its subcellular location is the golgi apparatus. The protein resides in the trans-Golgi network membrane. The catalysed reaction is ATP + H2O + phospholipidSide 1 = ADP + phosphate + phospholipidSide 2.. The sequence is that of Probable phospholipid-transporting ATPase IIB (ATP9B) from Bos taurus (Bovine).